Reading from the N-terminus, the 1071-residue chain is DNA-directed RNA polymerase subunit beta (1071 aa).

The protein belongs to the RNA polymerase beta chain family. In terms of assembly, in plastids the minimal PEP RNA polymerase catalytic core is composed of four subunits: alpha, beta, beta', and beta''. When a (nuclear-encoded) sigma factor is associated with the core the holoenzyme is formed, which can initiate transcription.

The protein resides in the plastid. It is found in the chloroplast. The enzyme catalyses RNA(n) + a ribonucleoside 5'-triphosphate = RNA(n+1) + diphosphate. Functionally, DNA-dependent RNA polymerase catalyzes the transcription of DNA into RNA using the four ribonucleoside triphosphates as substrates. The sequence is that of DNA-directed RNA polymerase subunit beta from Drimys granadensis.